Consider the following 411-residue polypeptide: Aspartokinase (411 aa).

Residue 7–10 (KFGG) participates in ATP binding. Position 25–30 (25–30 (RVIEEK)) interacts with substrate. Serine 41 serves as a coordination point for ATP. Substrate-binding positions include 47–49 (TDE), glutamate 74, 125–126 (LN), 150–153 (RGGS), and serine 153. ATP contacts are provided by residues 173–174 (TD) and 179–184 (FTTDPR). ACT domains are found at residues 264–338 (VTVF…SETG) and 344–411 (IVGS…KSER). Residues 289 to 291 (NVD), glutamine 295, 355 to 356 (VA), 369 to 370 (QV), and 376 to 377 (SE) each bind substrate.

The protein belongs to the aspartokinase family. As to quaternary structure, tetramer consisting of 2 isoforms Alpha (catalytic and regulation) and of a homodimer of 2 isoforms Beta (regulation).

The enzyme catalyses L-aspartate + ATP = 4-phospho-L-aspartate + ADP. The protein operates within amino-acid biosynthesis; L-lysine biosynthesis via DAP pathway; (S)-tetrahydrodipicolinate from L-aspartate: step 1/4. It functions in the pathway amino-acid biosynthesis; L-methionine biosynthesis via de novo pathway; L-homoserine from L-aspartate: step 1/3. Its pathway is amino-acid biosynthesis; L-threonine biosynthesis; L-threonine from L-aspartate: step 1/5. Its activity is regulated as follows. Lysine-sensitive. Its function is as follows. Catalyzes the phosphorylation of the beta-carboxyl group of aspartic acid with ATP to yield 4-phospho-L-aspartate, which is involved in the branched biosynthetic pathway leading to the biosynthesis of amino acids threonine, isoleucine and methionine. The chain is Aspartokinase (lysC) from Bacillus sp. (strain MGA3).